The primary structure comprises 891 residues: DNA mismatch repair protein MutS (891 aa).

ATP is bound at residue 646–653 (GPNMAGKS).

Belongs to the DNA mismatch repair MutS family.

Functionally, this protein is involved in the repair of mismatches in DNA. It is possible that it carries out the mismatch recognition step. This protein has a weak ATPase activity. In Rickettsia massiliae (strain Mtu5), this protein is DNA mismatch repair protein MutS.